A 209-amino-acid chain; its full sequence is MSKVYVFDHPLIQHKLTYIRDKHTGTKEFRELVEEVATLMAFEITRDLPLQEVDIETPVSKAKAKVIAGKKLGIIPILRAGIGMVDGILKLIPAAKVGHIGLYRDPETLKPVEYYVKLPTDVEERDFIVVDPMLATGGSAVEAIHALKKRGAKNIKFMCLIAAPEGVEAVQQAHPDVDIYIAALDEKLNDHGYIVPGLGDAGDRLFGTK.

5-phospho-alpha-D-ribose 1-diphosphate contacts are provided by residues arginine 79, arginine 104, and 131–139 (DPMLATGGS). Residues isoleucine 194 and 199–201 (GDA) each bind uracil. Aspartate 200 contacts 5-phospho-alpha-D-ribose 1-diphosphate.

It belongs to the UPRTase family. It depends on Mg(2+) as a cofactor.

It carries out the reaction UMP + diphosphate = 5-phospho-alpha-D-ribose 1-diphosphate + uracil. The protein operates within pyrimidine metabolism; UMP biosynthesis via salvage pathway; UMP from uracil: step 1/1. With respect to regulation, allosterically activated by GTP. Functionally, catalyzes the conversion of uracil and 5-phospho-alpha-D-ribose 1-diphosphate (PRPP) to UMP and diphosphate. The sequence is that of Uracil phosphoribosyltransferase from Anoxybacillus flavithermus (strain DSM 21510 / WK1).